The sequence spans 67 residues: MPKMKTKSSAKKRFRVRPGGTVKRGQAFKRHILTKKTTKNKRHLRGTVAVHETNMGHIAQMLPFAGL.

Belongs to the bacterial ribosomal protein bL35 family.

This is Large ribosomal subunit protein bL35 from Leptothrix cholodnii (strain ATCC 51168 / LMG 8142 / SP-6) (Leptothrix discophora (strain SP-6)).